Reading from the N-terminus, the 239-residue chain is Small ribosomal subunit protein uS3 (239 aa).

In terms of domain architecture, KH type-2 spans 39-107 (VRQVLRKKMS…SVHINVIEVR (69 aa)). The interval 214–239 (GQEKQDDGSRGDRNADRSSRRSREVR) is disordered. Over residues 216–239 (EKQDDGSRGDRNADRSSRRSREVR) the composition is skewed to basic and acidic residues.

This sequence belongs to the universal ribosomal protein uS3 family. Part of the 30S ribosomal subunit. Forms a tight complex with proteins S10 and S14.

Its function is as follows. Binds the lower part of the 30S subunit head. Binds mRNA in the 70S ribosome, positioning it for translation. The sequence is that of Small ribosomal subunit protein uS3 from Xylella fastidiosa (strain M12).